A 351-amino-acid chain; its full sequence is MSIVQLDHVSVTFKRKKAADVQAVQDVTLHIEKGDIYGIVGFSGAGKSTLVRTINLLQKPTAGDVVVGGVDFVKDGKQVISGKDLQARRRKIGMIFQQFNLLNETTVIENIAFALKHSDLSDDELEEKCHKLLKLVDLEDKANAYPAQLSGGQQQRVAIARALANDPEILLSDEATSALDPQTTIQILDLLKKLNRELGLTIVLITHEMAAVKKIANKVAVMENGRVVENGNLRDVFLAPKAELTQKFVGGSLAVVDTLKSLNISLAENEALYQLVYSLNNVAKSIIIELYREVGVEASMLYGNVEVLADEPVGTLLVMVKGDADKQKATLKFLSDEGVTVTELDERGNRL.

Residues 4 to 249 (VQLDHVSVTF…PKAELTQKFV (246 aa)) form the ABC transporter domain. 41-48 (GFSGAGKS) is an ATP binding site.

Belongs to the ABC transporter superfamily. Methionine importer (TC 3.A.1.24) family. In terms of assembly, the complex is composed of two ATP-binding proteins (MetN), two transmembrane proteins (MetI) and a solute-binding protein (MetQ).

It is found in the cell membrane. The enzyme catalyses L-methionine(out) + ATP + H2O = L-methionine(in) + ADP + phosphate + H(+). It carries out the reaction D-methionine(out) + ATP + H2O = D-methionine(in) + ADP + phosphate + H(+). Functionally, part of the ABC transporter complex MetNIQ involved in methionine import. Responsible for energy coupling to the transport system. This Lactobacillus delbrueckii subsp. bulgaricus (strain ATCC 11842 / DSM 20081 / BCRC 10696 / JCM 1002 / NBRC 13953 / NCIMB 11778 / NCTC 12712 / WDCM 00102 / Lb 14) protein is Methionine import ATP-binding protein MetN.